We begin with the raw amino-acid sequence, 305 residues long: Protoheme IX farnesyltransferase 2 (305 aa).

Helical transmembrane passes span Leu-38 to Gly-58, Ile-60 to Ile-80, Ile-115 to Ile-135, Ile-157 to Val-177, Ile-181 to Leu-201, Val-227 to Gly-247, Leu-249 to Leu-269, and Phe-285 to Phe-305.

This sequence belongs to the UbiA prenyltransferase family. Protoheme IX farnesyltransferase subfamily. Interacts with CtaA.

Its subcellular location is the cell membrane. It catalyses the reaction heme b + (2E,6E)-farnesyl diphosphate + H2O = Fe(II)-heme o + diphosphate. It functions in the pathway porphyrin-containing compound metabolism; heme O biosynthesis; heme O from protoheme: step 1/1. Its function is as follows. Converts heme B (protoheme IX) to heme O by substitution of the vinyl group on carbon 2 of heme B porphyrin ring with a hydroxyethyl farnesyl side group. The chain is Protoheme IX farnesyltransferase 2 (ctaB2) from Bacillus subtilis (strain 168).